The sequence spans 725 residues: Golgin candidate 4 (725 aa).

The tract at residues 17–62 is disordered; it reads HDVHDDDEDDDEDLTIYGSTNGGTDRRNSNGFRYSRSPMANGFESP. A compositionally biased stretch (acidic residues) spans 21 to 30; the sequence is DDDEDDDEDL. A coiled-coil region spans residues 66 to 132; sequence EIERYKAEIN…LKESRLDLSR (67 aa). Disordered stretches follow at residues 134-183, 191-210, and 311-349; these read SNNN…SHKK, LEERTRSMASAQARELEKER, and ASQKSTSRKLFPKSTEDLSRHLSSLDEEKAGTFPGKEDM. Residues 148 to 175 are compositionally biased toward polar residues; it reads NRSQRSPTNWKNRNQMNNGIASKPNGTE. Coiled-coil stretches lie at residues 191-316, 344-407, and 437-563; these read LEER…QKST, PGKE…QTNE, and EIRK…LNRM. Residues 324–349 show a composition bias toward basic and acidic residues; that stretch reads STEDLSRHLSSLDEEKAGTFPGKEDM. The 52-residue stretch at 562 to 613 folds into the GRIP domain; sequence RMSMDSDFLVDRRIVIKLLVTYFQRNHSREVLDLMVRMLGFSEEEKQRIGLA. Residues 672–688 are compositionally biased toward basic and acidic residues; the sequence is ERERREAEDAANKEQEK. The interval 672–725 is disordered; sequence ERERREAEDAANKEQEKATVSSTQRPKYEQSDSEFSTVPLTSSNSNHRLSRLLT. The span at 711 to 725 shows a compositional bias: low complexity; that stretch reads LTSSNSNHRLSRLLT.

The protein resides in the golgi apparatus. Functionally, golgi matrix protein playing a role in tethering of vesicles to Golgi membranes and in maintaining the overall structure of the Golgi apparatus. The protein is Golgin candidate 4 (GC4) of Arabidopsis thaliana (Mouse-ear cress).